A 145-amino-acid polypeptide reads, in one-letter code: ATP synthase epsilon chain (145 aa).

The protein belongs to the ATPase epsilon chain family. As to quaternary structure, F-type ATPases have 2 components, CF(1) - the catalytic core - and CF(0) - the membrane proton channel. CF(1) has five subunits: alpha(3), beta(3), gamma(1), delta(1), epsilon(1). CF(0) has three main subunits: a, b and c.

It is found in the cell inner membrane. Produces ATP from ADP in the presence of a proton gradient across the membrane. The protein is ATP synthase epsilon chain of Francisella tularensis subsp. mediasiatica (strain FSC147).